The chain runs to 289 residues: ATP synthase gamma chain (289 aa).

It belongs to the ATPase gamma chain family. F-type ATPases have 2 components, CF(1) - the catalytic core - and CF(0) - the membrane proton channel. CF(1) has five subunits: alpha(3), beta(3), gamma(1), delta(1), epsilon(1). CF(0) has three main subunits: a, b and c.

Its subcellular location is the cell membrane. Produces ATP from ADP in the presence of a proton gradient across the membrane. The gamma chain is believed to be important in regulating ATPase activity and the flow of protons through the CF(0) complex. This Lactococcus lactis subsp. cremoris (strain SK11) protein is ATP synthase gamma chain.